The sequence spans 458 residues: Forkhead box protein J1-A (458 aa).

Residues 68–78 (TGQHTSPSSHS) are compositionally biased toward polar residues. The tract at residues 68–99 (TGQHTSPSSHSHLMGSDAPSSPLAGDPASIGM) is disordered. Positions 142-236 (KPPYSYATLI…LNGAYKKRRL (95 aa)) form a DNA-binding region, fork-head. Basic residues predominate over residues 305-321 (TNKRKQPYNHRTGKTPR). Residues 305 to 324 (TNKRKQPYNHRTGKTPRRSS) form a disordered region.

This sequence belongs to the FOXJ1 family. Expressed in floor plate, dorsal forerunner cells, Kupffers vesicle, the floor plate, pronephric ducts and kidney.

The protein localises to the nucleus. Functionally, key transcription factor required for motile ciliogenesis. Activates genes essential for motile cilia formation and function. Its activity is sufficient for ectopic development of cilia that resemble motile cilia. The chain is Forkhead box protein J1-A from Danio rerio (Zebrafish).